A 203-amino-acid polypeptide reads, in one-letter code: Small ribosomal subunit protein uS4 (203 aa).

Residues 92-152 enclose the S4 RNA-binding domain; sequence LRLATVLLRA…EKSRKLVPFI (61 aa).

The protein belongs to the universal ribosomal protein uS4 family. Part of the 30S ribosomal subunit. Contacts protein S5. The interaction surface between S4 and S5 is involved in control of translational fidelity.

In terms of biological role, one of the primary rRNA binding proteins, it binds directly to 16S rRNA where it nucleates assembly of the body of the 30S subunit. Its function is as follows. With S5 and S12 plays an important role in translational accuracy. The polypeptide is Small ribosomal subunit protein uS4 (Thermobifida fusca (strain YX)).